The primary structure comprises 166 residues: Phosphopantetheine adenylyltransferase (166 aa).

Serine 9 lines the substrate pocket. Residues 9-10 (SF) and histidine 17 each bind ATP. The substrate site is built by lysine 41, leucine 74, and lysine 88. Residues 89-91 (GLR), glutamate 99, and 123-129 (YVHLSST) contribute to the ATP site.

Belongs to the bacterial CoaD family. As to quaternary structure, homohexamer. Mg(2+) is required as a cofactor.

The protein resides in the cytoplasm. The enzyme catalyses (R)-4'-phosphopantetheine + ATP + H(+) = 3'-dephospho-CoA + diphosphate. Its pathway is cofactor biosynthesis; coenzyme A biosynthesis; CoA from (R)-pantothenate: step 4/5. In terms of biological role, reversibly transfers an adenylyl group from ATP to 4'-phosphopantetheine, yielding dephospho-CoA (dPCoA) and pyrophosphate. The sequence is that of Phosphopantetheine adenylyltransferase from Paenarthrobacter aurescens (strain TC1).